The chain runs to 583 residues: Thiol:disulfide interchange protein DsbD (583 aa).

The first 20 residues, 1-20, serve as a signal peptide directing secretion; sequence MLKRFIFLLVGITLTLSAHA. Intrachain disulfides connect cysteine 123-cysteine 128 and cysteine 200-cysteine 322. The next 8 membrane-spanning stretches (helical) occupy residues 185-205, 237-257, 261-281, 302-322, 344-364, 375-395, 405-425, and 433-453; these read IFWFFLLGIGLAFTPCVLPML, LTYTLLGLVVAAIGLPFQVAL, PVLISLAILFTILAASMFGLF, GGAFGSVFVMGMIAGLVASPC, GLALYLLALGMGIPLILITLF, WLLKVKTAFGFVMLALPVFLL, PLMWSALAMVFVGWLISVIPT, and VRIVLFLTFAVASYPWANLVW. Positions 440-583 constitute a Thioredoxin domain; it reads TFAVASYPWA…NQFLNWLNQL (144 aa). Residues cysteine 500 and cysteine 503 are joined by a disulfide bond.

Belongs to the thioredoxin family. DsbD subfamily.

The protein localises to the cell inner membrane. It carries out the reaction [protein]-dithiol + NAD(+) = [protein]-disulfide + NADH + H(+). It catalyses the reaction [protein]-dithiol + NADP(+) = [protein]-disulfide + NADPH + H(+). Functionally, required to facilitate the formation of correct disulfide bonds in some periplasmic proteins and for the assembly of the periplasmic c-type cytochromes. Acts by transferring electrons from cytoplasmic thioredoxin to the periplasm. This transfer involves a cascade of disulfide bond formation and reduction steps. The sequence is that of Thiol:disulfide interchange protein DsbD from Actinobacillus pleuropneumoniae serotype 5b (strain L20).